A 622-amino-acid chain; its full sequence is Lamin Dm0 (622 aa).

The tract at residues methionine 1–serine 50 is disordered. Serine 2 bears the N-acetylserine mark. Residues serine 2–valine 56 are head. 3 positions are modified to phosphothreonine: threonine 10, threonine 12, and threonine 20. A compositionally biased stretch (pro residues) spans proline 21–serine 34. Phosphoserine occurs at positions 25 and 34. Threonine 39 is modified (phosphothreonine). A phosphoserine mark is found at serine 41, serine 42, and serine 45. Threonine 47 carries the phosphothreonine modification. Residues glutamate 54–leucine 410 form the IF rod domain. A coil 1A region spans residues lysine 55–aspartate 91. Residues threonine 92–isoleucine 103 form a linker 1 region. The interval phenylalanine 104–serine 241 is coil 1B. The residue at position 235 (serine 235) is a Phosphoserine. The segment at arginine 242 to lysine 265 is linker 2. The residue at position 249 (tyrosine 249) is a Phosphotyrosine. Phosphoserine is present on residues serine 250 and serine 311. Residues glutamine 266–alanine 408 are coil 2. Positions arginine 409 to cysteine 619 are tail. Residues threonine 413 and threonine 435 each carry the phosphothreonine modification. Polar residues predominate over residues arginine 429–threonine 440. The segment at arginine 429–lysine 448 is disordered. Residue serine 442 is modified to Phosphoserine. The short motif at lysine 446–valine 451 is the Nuclear localization signal element. 2 positions are modified to phosphoserine: serine 455 and serine 459. The region spanning alanine 461–serine 588 is the LTD domain. The residue at position 595 (serine 595) is a Phosphoserine. Residue threonine 597 is modified to Phosphothreonine. Residues glutamate 603–methionine 622 form a disordered region. A compositionally biased stretch (polar residues) spans leucine 605–methionine 622. The residue at position 615 (serine 615) is a Phosphoserine. Cysteine methyl ester is present on cysteine 619. Residue cysteine 619 is the site of S-farnesyl cysteine attachment. Residues alanine 620–methionine 622 constitute a propeptide, removed in mature form.

It belongs to the intermediate filament family. As to quaternary structure, interacts directly with LBR. Interacts with MAN1. Interacts with Ote. Three forms of lamin have been identified in D.melanogaster, lamin Dm0 is rapidly processed to lamin Dm1 in the cytoplasm, Dm1 is then assembled in the nuclear envelope and is then phosphorylated, forming lamin Dm2. As to expression, constitutively expressed in all tissues (at protein level). Expressed in spermatocytes (at protein level).

The protein resides in the nucleus. The protein localises to the nucleus inner membrane. It localises to the nucleus envelope. Its subcellular location is the nucleus lamina. It is found in the cytoplasm. The protein resides in the cytoskeleton. The protein localises to the spindle pole. In terms of biological role, lamins are components of the nuclear lamina, a fibrous layer on the nucleoplasmic side of the inner nuclear membrane, which is thought to provide a framework for the nuclear envelope and may also interact with chromatin. May have a role in the localization of the LEM domain proteins Ote, bocks and MAN1 to the nuclear membrane. In spermatocytes, plays a role in maintaining type-A lamin LamC nuclear localization; regulates meiotic cytokinesis by maintaining the structure of the spindle envelope, and by contributing to the formation of the contractile ring and central spindle. Required for nuclear migration and to link the microtubule organizing center (MTOC) to the nucleus. In addition, is required for nuclear envelope localization of klar. This is Lamin Dm0 from Drosophila melanogaster (Fruit fly).